Reading from the N-terminus, the 263-residue chain is Phosphoinositide-3-kinase-interacting protein 1 (263 aa).

An N-terminal signal peptide occupies residues 1–18 (MFGRLYFMLLLSVGLVDC). The Extracellular portion of the chain corresponds to 19-163 (LSVVKDCITN…SGPKKKKDLG (145 aa)). In terms of domain architecture, Kringle spans 24 to 99 (DCITNNGEDY…KKEACDIRIC (76 aa)). Cystine bridges form between Cys-25-Cys-99, Cys-46-Cys-80, and Cys-69-Cys-94. N-linked (GlcNAc...) asparagine glycosylation is present at Asn-103. A helical membrane pass occupies residues 164-184 (TLGYVLAVFMMAIIILLGGGI). The Cytoplasmic segment spans residues 185–263 (TMGYFYKRGR…LMGSAGTPGA (79 aa)). The interval 239 to 263 (NNQTPTQEPVEGADPLMGSAGTPGA) is disordered.

Its subcellular location is the cell membrane. Its function is as follows. Negative regulator of hepatic phosphatidylinositol 3-kinase (PI3K) activity. The sequence is that of Phosphoinositide-3-kinase-interacting protein 1 (pik3ip1) from Danio rerio (Zebrafish).